The primary structure comprises 118 residues: NADPH-dependent 7-cyano-7-deazaguanine reductase (118 aa).

Catalysis depends on C31, which acts as the Thioimide intermediate. D38 functions as the Proton donor in the catalytic mechanism. Residues 53–55 (VEL) and 72–73 (YE) contribute to the substrate site.

Belongs to the GTP cyclohydrolase I family. QueF type 1 subfamily.

It is found in the cytoplasm. It carries out the reaction 7-aminomethyl-7-carbaguanine + 2 NADP(+) = 7-cyano-7-deazaguanine + 2 NADPH + 3 H(+). The protein operates within tRNA modification; tRNA-queuosine biosynthesis. Its function is as follows. Catalyzes the NADPH-dependent reduction of 7-cyano-7-deazaguanine (preQ0) to 7-aminomethyl-7-deazaguanine (preQ1). This chain is NADPH-dependent 7-cyano-7-deazaguanine reductase, found in Chlorobium phaeobacteroides (strain BS1).